A 799-amino-acid polypeptide reads, in one-letter code: Ribonucleoside-diphosphate reductase large subunit (799 aa).

Substrate-binding positions include threonine 192, 207 to 208 (SC), glycine 238, 408 to 412 (NLCAE), and 612 to 616 (PTAGT). A disulfide bridge links cysteine 208 with cysteine 424. Asparagine 408 acts as the Proton acceptor in catalysis. The Cysteine radical intermediate role is filled by cysteine 410. Catalysis depends on glutamate 412, which acts as the Proton acceptor. The segment at 765–799 (PDSGDGVGGYKGGDEEPRSPEHAQCESPDRCLSCQ) is disordered. Residues 776-793 (GGDEEPRSPEHAQCESPD) show a composition bias toward basic and acidic residues.

Belongs to the ribonucleoside diphosphate reductase large chain family. Heterotetramer composed of a homodimer of the large subunit (R1) and a homodimer of the small subunit (R2). Larger multisubunit protein complex are also active, composed of (R1)n(R2)n.

It carries out the reaction a 2'-deoxyribonucleoside 5'-diphosphate + [thioredoxin]-disulfide + H2O = a ribonucleoside 5'-diphosphate + [thioredoxin]-dithiol. Its function is as follows. Ribonucleoside-diphosphate reductase holoenzyme provides the precursors necessary for viral DNA synthesis. Allows virus growth in non-dividing cells, as well as reactivation from latency in infected hosts. Catalyzes the biosynthesis of deoxyribonucleotides from the corresponding ribonucleotides. This is Ribonucleoside-diphosphate reductase large subunit from Equine herpesvirus 2 (strain 86/87) (EHV-2).